Reading from the N-terminus, the 221-residue chain is uncharacterized protein (221 aa).

Residues 77–96 (YRERAVELGVPERAILVEPN) constitute a DNA-binding region (H-T-H motif).

It to E.coli YdcF.

In terms of biological role, the imp locus inhibits the extrachromosomal maintenance of the streptomyces plasmid SLP1. May function as a transcriptional activator. This is an uncharacterized protein from Streptomyces coelicolor (strain ATCC BAA-471 / A3(2) / M145).